Consider the following 215-residue polypeptide: HTH-type transcriptional repressor FabR (215 aa).

The region spanning 10-70 (KTRRSLVEAA…TMVDESGLML (61 aa)) is the HTH tetR-type domain. Residues 33-52 (SLREVAREAVIAPTSFYRHF) constitute a DNA-binding region (H-T-H motif).

As to quaternary structure, homodimer.

The protein resides in the cytoplasm. In terms of biological role, represses the transcription of fabB, involved in unsaturated fatty acid (UFA) biosynthesis. By controlling UFA production, FabR directly influences the physical properties of the membrane bilayer. This chain is HTH-type transcriptional repressor FabR, found in Escherichia coli (strain K12 / MC4100 / BW2952).